A 210-amino-acid chain; its full sequence is Na(+)-translocating NADH-quinone reductase subunit D (210 aa).

5 consecutive transmembrane segments (helical) span residues 42 to 62, 72 to 92, 103 to 123, 131 to 151, and 178 to 198; these read FVMT…ISLI, IIAQ…VLKA, VFVG…AYAM, FLDG…VATV, and NGLL…IWGV.

The protein belongs to the NqrDE/RnfAE family. In terms of assembly, composed of six subunits; NqrA, NqrB, NqrC, NqrD, NqrE and NqrF.

It localises to the cell inner membrane. The catalysed reaction is a ubiquinone + n Na(+)(in) + NADH + H(+) = a ubiquinol + n Na(+)(out) + NAD(+). Functionally, NQR complex catalyzes the reduction of ubiquinone-1 to ubiquinol by two successive reactions, coupled with the transport of Na(+) ions from the cytoplasm to the periplasm. NqrA to NqrE are probably involved in the second step, the conversion of ubisemiquinone to ubiquinol. In Aeromonas hydrophila subsp. hydrophila (strain ATCC 7966 / DSM 30187 / BCRC 13018 / CCUG 14551 / JCM 1027 / KCTC 2358 / NCIMB 9240 / NCTC 8049), this protein is Na(+)-translocating NADH-quinone reductase subunit D.